Reading from the N-terminus, the 297-residue chain is Nuclear transcription factor Y subunit B-11 (297 aa).

The interval 1–25 (MKSRKSYGHLLSPVGSPPLDNESGE) is disordered. Residues 63 to 69 (LPIANVS) mediate DNA binding. Positions 90-101 (VQECVSEFISFV) are subunit association domain (SAD).

It belongs to the NFYB/HAP3 subunit family. In terms of assembly, heterotrimeric transcription factor composed of three components, NF-YA, NF-YB and NF-YC. NF-YB and NF-YC must interact and dimerize for NF-YA association and DNA binding. Interacts with NFYC2, NFYC4 and NFYC6. Expressed in roots, culms, nodes, leaf blades, leaf sheaths and young panicles.

Its subcellular location is the nucleus. It is found in the cytoplasm. Probable transcription factor involved in the regulation of flowering time under long day (LD) conditions. Functions as a repressor of flowering, independently of HD1 and GHD7. Controls flowering time by negatively regulating the expression of EHD1 and HD3A. Regulates plant height by promoting cell elongation in the internodes. Component of the NF-Y/HAP transcription factor complex. This Oryza sativa subsp. japonica (Rice) protein is Nuclear transcription factor Y subunit B-11 (HD5).